Consider the following 586-residue polypeptide: Acetylcholinesterase (586 aa).

The signal sequence occupies residues 1 to 21 (MNLLVTSSLGVLLHLVVLCQA). N-linked (GlcNAc...) asparagine glycosylation is present at N80. C88 and C115 are disulfide-bonded. S221 serves as the catalytic Acyl-ester intermediate. A disulfide bridge links C275 with C286. E348 (charge relay system) is an active-site residue. Cysteines 423 and 542 form a disulfide. The N-linked (GlcNAc...) asparagine glycan is linked to N437. H461 functions as the Charge relay system in the catalytic mechanism. Residues N478 and N554 are each glycosylated (N-linked (GlcNAc...) asparagine). Residue S564 is the site of GPI-anchor amidated serine attachment. Positions 565-586 (SGTSSSKGIIFYVLFSILYLIF) are cleaved as a propeptide — removed in mature form.

It belongs to the type-B carboxylesterase/lipase family. Isoform H form is a homodimer; the asymmetric form is a disulfide-bonded oligomer composed of a collagenic subunit (Q) and a variable number of T catalytic subunits. In terms of processing, an interchain disulfide bond is present in what becomes position 593 of the T isoform. Found in the synapses and to a lower extent in extrajunctional areas of muscle and nerve, and on erythrocyte membranes.

It localises to the cell membrane. It is found in the synapse. The enzyme catalyses acetylcholine + H2O = choline + acetate + H(+). With respect to regulation, inhibited by substrate concentrations above 0.5 mM. In terms of biological role, terminates signal transduction at the neuromuscular junction by rapid hydrolysis of the acetylcholine released into the synaptic cleft. May be involved in cell-cell interactions. The sequence is that of Acetylcholinesterase (ache) from Tetronarce californica (Pacific electric ray).